The following is a 241-amino-acid chain: Histidine-rich protein PFHRP-III (241 aa).

Residues Met1 to Leu21 form the signal peptide. Residues Ala52–His76 show a composition bias toward basic and acidic residues. Disordered stretches follow at residues Ala52 to His145 and Ala195 to His241. Residues Ala84–His145 are compositionally biased toward low complexity. The segment covering Ala195–His231 has biased composition (basic and acidic residues).

The chain is Histidine-rich protein PFHRP-III from Plasmodium falciparum.